Consider the following 69-residue polypeptide: Large ribosomal subunit protein bL31 (69 aa).

4 residues coordinate Zn(2+): C16, C18, C37, and C40.

It belongs to the bacterial ribosomal protein bL31 family. Type A subfamily. Part of the 50S ribosomal subunit. Zn(2+) is required as a cofactor.

Binds the 23S rRNA. In Buchnera aphidicola subsp. Cinara cedri (strain Cc), this protein is Large ribosomal subunit protein bL31.